The following is a 102-amino-acid chain: MHIDITHYLIVSALIFTIGIAGIFLNRKNVIIILMSIELILLSVNLNFVAFSAFFQDLVGQIFALFILTVAAAEAAIGLAILVVFFRNCGSIAVEDVNVMKG.

Helical transmembrane passes span 5–25, 31–51, and 66–86; these read ITHY…GIFL, IIIL…FVAF, and FILT…VVFF.

The protein belongs to the complex I subunit 4L family. In terms of assembly, NDH-1 is composed of 14 different subunits. Subunits NuoA, H, J, K, L, M, N constitute the membrane sector of the complex.

It is found in the cell inner membrane. It carries out the reaction a quinone + NADH + 5 H(+)(in) = a quinol + NAD(+) + 4 H(+)(out). Its function is as follows. NDH-1 shuttles electrons from NADH, via FMN and iron-sulfur (Fe-S) centers, to quinones in the respiratory chain. The immediate electron acceptor for the enzyme in this species is believed to be ubiquinone. Couples the redox reaction to proton translocation (for every two electrons transferred, four hydrogen ions are translocated across the cytoplasmic membrane), and thus conserves the redox energy in a proton gradient. The protein is NADH-quinone oxidoreductase subunit K of Bartonella quintana (strain Toulouse) (Rochalimaea quintana).